Here is a 244-residue protein sequence, read N- to C-terminus: Small ribosomal subunit protein uS2 (244 aa).

The disordered stretch occupies residues 224–244 (GQQGSDEAEEAEEAAEEVVAE). Acidic residues predominate over residues 229-244 (DEAEEAEEAAEEVVAE).

Belongs to the universal ribosomal protein uS2 family.

This chain is Small ribosomal subunit protein uS2, found in Desulfitobacterium hafniense (strain DSM 10664 / DCB-2).